The chain runs to 270 residues: Regulatory protein RecX (270 aa).

Belongs to the RecX family.

Its subcellular location is the cytoplasm. Functionally, modulates RecA activity. This Bacillus cereus (strain AH187) protein is Regulatory protein RecX.